The sequence spans 163 residues: Glycine cleavage system H protein, mitochondrial (163 aa).

The transit peptide at 1–34 directs the protein to the mitochondrion; it reads MALRMWASSAANALGVSCAPKSHLLPALSLSRCF. One can recognise a Lipoyl-binding domain in the interval 56-137; it reads VATIGITDHA…YEEGWMVKVK (82 aa). Lysine 96 is modified (N6-lipoyllysine).

It belongs to the GcvH family. The glycine cleavage system is composed of four proteins: P, T, L and H. (R)-lipoate is required as a cofactor.

It is found in the mitochondrion. The glycine cleavage system catalyzes the degradation of glycine. The H protein shuttles the methylamine group of glycine from the P protein to the T protein. In Mesembryanthemum crystallinum (Common ice plant), this protein is Glycine cleavage system H protein, mitochondrial (GDCSH).